The following is a 459-amino-acid chain: Ribulose bisphosphate carboxylase large chain (459 aa).

At Lys4 the chain carries N6,N6,N6-trimethyllysine. Positions 113 and 163 each coordinate substrate. Lys165 serves as the catalytic Proton acceptor. Lys167 is a binding site for substrate. The Mg(2+) site is built by Lys191, Asp193, and Glu194. Residue Lys191 is modified to N6-carboxylysine. The active-site Proton acceptor is the His284. Positions 285, 317, and 369 each coordinate substrate.

Belongs to the RuBisCO large chain family. Type I subfamily. As to quaternary structure, heterohexadecamer of 8 large chains and 8 small chains; disulfide-linked. The disulfide link is formed within the large subunit homodimers. It depends on Mg(2+) as a cofactor. The disulfide bond which can form in the large chain dimeric partners within the hexadecamer appears to be associated with oxidative stress and protein turnover.

The protein resides in the plastid. The protein localises to the chloroplast. The enzyme catalyses 2 (2R)-3-phosphoglycerate + 2 H(+) = D-ribulose 1,5-bisphosphate + CO2 + H2O. It carries out the reaction D-ribulose 1,5-bisphosphate + O2 = 2-phosphoglycolate + (2R)-3-phosphoglycerate + 2 H(+). Its function is as follows. RuBisCO catalyzes two reactions: the carboxylation of D-ribulose 1,5-bisphosphate, the primary event in carbon dioxide fixation, as well as the oxidative fragmentation of the pentose substrate in the photorespiration process. Both reactions occur simultaneously and in competition at the same active site. The polypeptide is Ribulose bisphosphate carboxylase large chain (Geum quellyon (Chilean avens)).